A 703-amino-acid polypeptide reads, in one-letter code: MSEQKAFSLNVDEQNIAWLAIDVPNEKMNTLQAAFADEMKEIFAQLKDSSGIKGMIIHSLKPDNFVAGADVRMLEACTTANEAQALAKQGQELFQQLSDLPYPVVAAIHGPCLGGGLELALACDYRVCTDFDKTRLGLPEVQLGLLPGSGGTQRLPRLIGLLPSLDLILTGKQLRAKKAKKLGVVDACVPDTILLDVAKQFIDKGKNKGKKKQSTKEKLMSGSGLGRKLVFEQAAKKTNQKTRGNYPATVAILEVIQHGLEKGFAQGQELEAKRFGELVMSSESKALRSIFFATTEMKKEHGTDAQPAAVKKVGVLGGGLMGAGISHVTVAKAKVPVRIKDVSNDGVLNALNYNYKLFEKQRKRRILSKADLQAKMLQLSGGVDFTSYNHIDVVIEAVFEDLDLKQQMVADIEANAKSETIFATNTSSLPIHKIAEKAERPENIVGLHYFSPVEKMPLVEVIPHETTSDETISTVVALAKKQGKTPIVVKDKAGFYVNRILAPYMNEAAHILLANEPIEKLDGALLDFGFPVGPITLLDEVGVDIGAKIMPILVNELGERFKGPDVFDILLNDGRKGRKSGKGFYTYKGKKKEVDKSIYKLLKLTPESKLSDNDIALRCVLPMLNEAVRCLDDGIIRSPRDGDIGAIFGIGFPPFLGGPFRYMDQFGLKELVEKMNEFASKYGDRYAPCDGLLTRAGEGRTFY.

Positions 1-190 are enoyl-CoA hydratase; that stretch reads MSEQKAFSLN…KLGVVDACVP (190 aa). Positions 308–703 are 3-hydroxyacyl-CoA dehydrogenase; that stretch reads AAVKKVGVLG…TRAGEGRTFY (396 aa).

It in the N-terminal section; belongs to the enoyl-CoA hydratase/isomerase family. The protein in the central section; belongs to the 3-hydroxyacyl-CoA dehydrogenase family. In terms of assembly, heterotetramer of two alpha chains (FadJ) and two beta chains (FadI).

It is found in the cytoplasm. It carries out the reaction a (3S)-3-hydroxyacyl-CoA = a (2E)-enoyl-CoA + H2O. The enzyme catalyses a 4-saturated-(3S)-3-hydroxyacyl-CoA = a (3E)-enoyl-CoA + H2O. The catalysed reaction is a (3S)-3-hydroxyacyl-CoA + NAD(+) = a 3-oxoacyl-CoA + NADH + H(+). It catalyses the reaction (3S)-3-hydroxybutanoyl-CoA = (3R)-3-hydroxybutanoyl-CoA. It functions in the pathway lipid metabolism; fatty acid beta-oxidation. In terms of biological role, catalyzes the formation of a hydroxyacyl-CoA by addition of water on enoyl-CoA. Also exhibits 3-hydroxyacyl-CoA epimerase and 3-hydroxyacyl-CoA dehydrogenase activities. The protein is Fatty acid oxidation complex subunit alpha of Vibrio parahaemolyticus serotype O3:K6 (strain RIMD 2210633).